The chain runs to 238 residues: RNA-free ribonuclease P (238 aa).

It belongs to the HARP family.

The catalysed reaction is Endonucleolytic cleavage of RNA, removing 5'-extranucleotides from tRNA precursor.. In terms of biological role, RNA-free RNase P that catalyzes the removal of the 5'-leader sequence from pre-tRNA to produce the mature 5'-terminus. This is RNA-free ribonuclease P from Hyperthermus butylicus (strain DSM 5456 / JCM 9403 / PLM1-5).